The sequence spans 306 residues: tRNA dimethylallyltransferase (306 aa).

Position 12-19 (12-19) interacts with ATP; the sequence is GPTGVGKS. 14–19 is a substrate binding site; sequence TGVGKS.

It belongs to the IPP transferase family. In terms of assembly, monomer. It depends on Mg(2+) as a cofactor.

The enzyme catalyses adenosine(37) in tRNA + dimethylallyl diphosphate = N(6)-dimethylallyladenosine(37) in tRNA + diphosphate. Its function is as follows. Catalyzes the transfer of a dimethylallyl group onto the adenine at position 37 in tRNAs that read codons beginning with uridine, leading to the formation of N6-(dimethylallyl)adenosine (i(6)A). The polypeptide is tRNA dimethylallyltransferase (Desulfatibacillum aliphaticivorans).